Here is a 252-residue protein sequence, read N- to C-terminus: Vacuolar iron transporter 1 (252 aa).

The Cytoplasmic portion of the chain corresponds to 1–38 (MAAATDGGGLPLLADKAASHSHHHHPERHFTSGEVVRD). Residues 39–59 (VIMGVSDGLTVPFALAAGLSG) traverse the membrane as a helical segment. Over 60–65 (ASAPSS) the chain is Vacuolar. Residues 66-86 (LVLTAGLAEVAAGAISMGLGG) traverse the membrane as a helical segment. Residues 87–170 (YLAAKSEADH…PDPKRAIQSA (84 aa)) are Cytoplasmic-facing. The cytoplasmic metal binding domain (MBD) stretch occupies residues 92 to 167 (SEADHYQREM…LEKPDPKRAI (76 aa)). Fe cation contacts are provided by Glu-104, Glu-107, Glu-115, Glu-118, Met-151, and Glu-155. Residues 171–191 (LTIALSYVIGGLVPLLPYMFI) traverse the membrane as a helical segment. Topologically, residues 192-196 (STAQN) are vacuolar. A helical membrane pass occupies residues 197–217 (AMLTSVGVTLVALLFFGYIKG). At 218 to 224 (RFTGNRP) the chain is on the cytoplasmic side. A helical membrane pass occupies residues 225–245 (FLSAVQTAIIGALASAAAYGM). Residues 246–252 (AKAVQTR) lie on the Vacuolar side of the membrane.

Belongs to the CCC1 family. As to quaternary structure, homodimer. The dimeric interaction is mediated by both the transmembrane domains (TMDs) and the cytoplasmic metal binding domain (MBD). As to expression, highly expressed in leaf blades. Expressed in leaf sheaths.

The protein resides in the vacuole membrane. The enzyme catalyses Fe(2+)(in) = Fe(2+)(out). In terms of biological role, vacuolar iron transporter involved in the transfer of iron ions from the cytosol to the vacuole for intracellular iron storage. Vacuolar iron storage is required for seed embryo and seedling development. May be involved in the regulation of iron translocation between flag leaves and seeds. Can transport zinc ions from the cytosol to the vacuole. The sequence is that of Vacuolar iron transporter 1 from Oryza sativa subsp. japonica (Rice).